We begin with the raw amino-acid sequence, 449 residues long: Phosphoglucosamine mutase (449 aa).

Residue Ser103 is the Phosphoserine intermediate of the active site. Residues Ser103, Asp240, Asp242, and Asp244 each contribute to the Mg(2+) site. Ser103 bears the Phosphoserine mark.

The protein belongs to the phosphohexose mutase family. Mg(2+) is required as a cofactor. Activated by phosphorylation.

It carries out the reaction alpha-D-glucosamine 1-phosphate = D-glucosamine 6-phosphate. Its function is as follows. Catalyzes the conversion of glucosamine-6-phosphate to glucosamine-1-phosphate. The chain is Phosphoglucosamine mutase from Thermobifida fusca (strain YX).